Here is a 259-residue protein sequence, read N- to C-terminus: Small ribosomal subunit protein uS2 (259 aa).

The segment at 234–259 (VAEDSEEVSTVDADAITAEDFETEEV) is disordered. Acidic residues predominate over residues 250–259 (TAEDFETEEV).

This sequence belongs to the universal ribosomal protein uS2 family.

This Sulfurimonas denitrificans (strain ATCC 33889 / DSM 1251) (Thiomicrospira denitrificans (strain ATCC 33889 / DSM 1251)) protein is Small ribosomal subunit protein uS2.